The sequence spans 91 residues: Probable Fe(2+)-trafficking protein (91 aa).

This sequence belongs to the Fe(2+)-trafficking protein family.

Functionally, could be a mediator in iron transactions between iron acquisition and iron-requiring processes, such as synthesis and/or repair of Fe-S clusters in biosynthetic enzymes. This is Probable Fe(2+)-trafficking protein from Burkholderia thailandensis (strain ATCC 700388 / DSM 13276 / CCUG 48851 / CIP 106301 / E264).